An 825-amino-acid polypeptide reads, in one-letter code: Phenylalanine--tRNA ligase beta subunit (825 aa).

One can recognise a tRNA-binding domain in the interval 39-154 (RTWADGVVLG…EAHPLGSDVR (116 aa)). In terms of domain architecture, B5 spans 411–506 (PLERTLKLRL…RLYGYDRFSE (96 aa)). Aspartate 484, aspartate 490, glutamate 493, and glutamate 494 together coordinate Mg(2+). The FDX-ACB domain maps to 731–824 (SPFPAADRDI…LATQFPVTLR (94 aa)).

This sequence belongs to the phenylalanyl-tRNA synthetase beta subunit family. Type 1 subfamily. As to quaternary structure, tetramer of two alpha and two beta subunits. The cofactor is Mg(2+).

Its subcellular location is the cytoplasm. It catalyses the reaction tRNA(Phe) + L-phenylalanine + ATP = L-phenylalanyl-tRNA(Phe) + AMP + diphosphate + H(+). The protein is Phenylalanine--tRNA ligase beta subunit of Synechococcus sp. (strain JA-2-3B'a(2-13)) (Cyanobacteria bacterium Yellowstone B-Prime).